Reading from the N-terminus, the 445-residue chain is Phosphoglucosamine mutase (445 aa).

The active-site Phosphoserine intermediate is the serine 102. Serine 102, aspartate 241, aspartate 243, and aspartate 245 together coordinate Mg(2+). Serine 102 bears the Phosphoserine mark.

It belongs to the phosphohexose mutase family. Mg(2+) is required as a cofactor. Post-translationally, activated by phosphorylation.

It catalyses the reaction alpha-D-glucosamine 1-phosphate = D-glucosamine 6-phosphate. Functionally, catalyzes the conversion of glucosamine-6-phosphate to glucosamine-1-phosphate. This Citrobacter koseri (strain ATCC BAA-895 / CDC 4225-83 / SGSC4696) protein is Phosphoglucosamine mutase.